Consider the following 816-residue polypeptide: Probable disease resistance protein At4g33300 (816 aa).

One can recognise an RPW8 domain in the interval 1–149; sequence MAITDFFAGE…SLDRVIQQVG (149 aa). Positions 95-111 form a coiled coil; the sequence is TLARKMEKLEKTISNFL. The NB-ARC domain maps to 191–443; the sequence is VKKMMFESQG…LDVLINIWIE (253 aa). 207-214 lines the ATP pocket; the sequence is GMGGVGKT. Positions 399–415 form a coiled coil; it reads SRLLRQMEASLDNLDQT. LRR repeat units follow at residues 681–704, 705–727, 729–751, and 753–774; these read SLSC…SKLQ, ALEI…ICEL, GLKY…IGKL, and KLEK…AVSL.

The protein belongs to the disease resistance NB-LRR family.

Functionally, probable disease resistance protein. The polypeptide is Probable disease resistance protein At4g33300 (Arabidopsis thaliana (Mouse-ear cress)).